Here is a 485-residue protein sequence, read N- to C-terminus: Glutamyl-tRNA(Gln) amidotransferase subunit A (485 aa).

Catalysis depends on charge relay system residues Lys-78 and Ser-153. Catalysis depends on Ser-177, which acts as the Acyl-ester intermediate.

It belongs to the amidase family. GatA subfamily. Heterotrimer of A, B and C subunits.

The enzyme catalyses L-glutamyl-tRNA(Gln) + L-glutamine + ATP + H2O = L-glutaminyl-tRNA(Gln) + L-glutamate + ADP + phosphate + H(+). Its function is as follows. Allows the formation of correctly charged Gln-tRNA(Gln) through the transamidation of misacylated Glu-tRNA(Gln) in organisms which lack glutaminyl-tRNA synthetase. The reaction takes place in the presence of glutamine and ATP through an activated gamma-phospho-Glu-tRNA(Gln). In Desulfatibacillum aliphaticivorans, this protein is Glutamyl-tRNA(Gln) amidotransferase subunit A.